A 431-amino-acid polypeptide reads, in one-letter code: Nuclear receptor subfamily 1 group I member 2 (431 aa).

The segment at residues 35–104 (LQICRVCGDK…RLRKCLESGM (70 aa)) is a DNA-binding region (nuclear receptor). 2 NR C4-type zinc fingers span residues 38-58 (CRVC…CEGC) and 74-99 (CPFR…LRKC). Positions 63–89 (RRAMKRNVRLRCPFRKGTCEITRKTRR) match the Bipartite nuclear localization signal motif. Positions 105–142 (KKEMIMSDAAVEQRRALIKRKKREKIEAPPPGGQGLTE) are hinge. Positions 143 to 430 (EQQALIQELM…LMQELFSSTD (288 aa)) constitute an NR LBD domain. Hyperforin is bound by residues serine 244 and 282–285 (ILRF).

It belongs to the nuclear hormone receptor family. NR1 subfamily. Heterodimer with RXRA. Interacts with NCOA1. Interacts (via domain NR LBD) with CRY1 and CRY2 in a ligand-dependent manner.

It localises to the nucleus. Nuclear receptor that binds and is activated by a variety of endogenous and xenobiotic compounds. Transcription factor that activates the transcription of multiple genes involved in the metabolism and secretion of potentially harmful xenobiotics, endogenous compounds and drugs. Response to specific ligands is species-specific, due to differences in the ligand-binding domain. Binds to a response element in the promoters of the CYP3A4 and ABCB1/MDR1 genes. Activated by naturally occurring steroids such as pregnenolone and progesterone, the cholesterol metabolite 5-beta-cholestane-3-alpha,7-alpha,12-alpha-triol, synthetic glucocorticoids and antiglucocorticoids and 16-alpha-carbonitrile (PCN). This is Nuclear receptor subfamily 1 group I member 2 (Nr1i2) from Mus musculus (Mouse).